The sequence spans 608 residues: Dextranase (608 aa).

The first 19 residues, 1–19 (MATMLKLLALTLAISESAI), serve as a signal peptide directing secretion. Positions 20-34 (GAVMHPPGNSHPGTH) are excised as a propeptide. N-linked (GlcNAc...) asparagine glycosylation is found at Asn-39, Asn-571, and Asn-574.

It belongs to the glycosyl hydrolase 49 family. N-glycosylated.

It is found in the secreted. The catalysed reaction is Endohydrolysis of (1-&gt;6)-alpha-D-glucosidic linkages in dextran.. The polypeptide is Dextranase (DEX) (Talaromyces minioluteus (Filamentous fungus)).